The primary structure comprises 345 residues: Dihydroorotase (345 aa).

Residues histidine 14 and histidine 16 each coordinate Zn(2+). Substrate contacts are provided by residues 16–18 and asparagine 42; that span reads HLR. Zn(2+) contacts are provided by lysine 100, histidine 137, and histidine 175. Lysine 100 carries the N6-carboxylysine modification. Histidine 137 lines the substrate pocket. Substrate is bound at residue leucine 220. Aspartate 248 is a binding site for Zn(2+). The active site involves aspartate 248. Residues histidine 252 and alanine 264 each contribute to the substrate site.

The protein belongs to the metallo-dependent hydrolases superfamily. DHOase family. Class II DHOase subfamily. Homodimer. Zn(2+) is required as a cofactor.

The enzyme catalyses (S)-dihydroorotate + H2O = N-carbamoyl-L-aspartate + H(+). It participates in pyrimidine metabolism; UMP biosynthesis via de novo pathway; (S)-dihydroorotate from bicarbonate: step 3/3. In terms of biological role, catalyzes the reversible cyclization of carbamoyl aspartate to dihydroorotate. This chain is Dihydroorotase, found in Nitrosococcus oceani (strain ATCC 19707 / BCRC 17464 / JCM 30415 / NCIMB 11848 / C-107).